A 286-amino-acid polypeptide reads, in one-letter code: MNEYFLLPLASLPFPNINPILIQIGPLAVHWYGVGYIVGILFAWWYAKRLAANPKLWPDGILPMKLEDLDDFIVWAAIGVVLGGRTGYVLFYDLPRYIAHPLDIFAVWQGGMSFHGGLLGVILAMTLFSIKRGIRTWSLFDVVAAGVPVGLGLVRVANFINSELWGRPTDVPWAIEFPNGGPFTRHPSQLYEALLEGLVLFVVLRILTHSRLKLKTPRFVGGAFICGYGLSRIFVEFFREPDQQLGYLLGTNWLTMGMILSTPMVLAGIWAMATAKPVKQAQPQAT.

Transmembrane regions (helical) follow at residues 24 to 44, 72 to 92, 104 to 124, 140 to 160, 190 to 210, 218 to 238, and 253 to 273; these read IGPLAVHWYGVGYIVGILFAW, FIVWAAIGVVLGGRTGYVLFY, IFAVWQGGMSFHGGLLGVILA, FDVVAAGVPVGLGLVRVANFI, LYEALLEGLVLFVVLRILTHS, RFVGGAFICGYGLSRIFVEFF, and WLTMGMILSTPMVLAGIWAMA. Arg155 is a binding site for a 1,2-diacyl-sn-glycero-3-phospho-(1'-sn-glycerol).

It belongs to the Lgt family.

It is found in the cell inner membrane. It carries out the reaction L-cysteinyl-[prolipoprotein] + a 1,2-diacyl-sn-glycero-3-phospho-(1'-sn-glycerol) = an S-1,2-diacyl-sn-glyceryl-L-cysteinyl-[prolipoprotein] + sn-glycerol 1-phosphate + H(+). Its pathway is protein modification; lipoprotein biosynthesis (diacylglyceryl transfer). Functionally, catalyzes the transfer of the diacylglyceryl group from phosphatidylglycerol to the sulfhydryl group of the N-terminal cysteine of a prolipoprotein, the first step in the formation of mature lipoproteins. This Mesorhizobium japonicum (strain LMG 29417 / CECT 9101 / MAFF 303099) (Mesorhizobium loti (strain MAFF 303099)) protein is Phosphatidylglycerol--prolipoprotein diacylglyceryl transferase.